We begin with the raw amino-acid sequence, 87 residues long: Selenoprotein W (87 aa).

Residues 10–13 (CGAU) constitute a cross-link (cysteinyl-selenocysteine (Cys-Sec); redox-active). Sec-13 is a non-standard amino acid (selenocysteine). Residue Cys-37 is modified to S-glutathionyl cysteine.

This sequence belongs to the SelWTH family. Selenoprotein W subfamily. In terms of assembly, interacts with DPYSL2, PRDX1, YWHAB, YWHAG, HSP70 and HSP90. In terms of tissue distribution, detected in muscle, heart, tongue, brain, lung, spleen, kidney and liver. Highest levels expressed in muscle and heart whereas lowest levels detected in liver (at protein level).

It localises to the cytoplasm. Its function is as follows. Plays a role as a glutathione (GSH)-dependent antioxidant. May be involved in a redox-related process. May play a role in the myopathies of selenium deficiency. The polypeptide is Selenoprotein W (Ovis aries (Sheep)).